A 519-amino-acid polypeptide reads, in one-letter code: F-box only protein 31-A (519 aa).

Residues 11 to 37 (GQSGGCRRRQQRKGAGNDPELEDEEEE) form a disordered region. Positions 54–100 (PHSLLLLPPEILVEIFSLLPGTELGGLAQVCSKFRQILTTDTIWKRR) constitute an F-box domain. Residues Cys196, His204, Cys220, and His226 each coordinate Zn(2+). Residues 369–390 (REQRQTDNEEDDGRGAGPDKAE) are compositionally biased toward basic and acidic residues. The disordered stretch occupies residues 369–424 (REQRQTDNEEDDGRGAGPDKAEPAQQPAPLLRPPNEDANGADDDGDGGEQKPPNVQ).

This sequence belongs to the FBXO31 family. As to quaternary structure, part of a SCF (SKP1-cullin-F-box) protein ligase complex SCF(FBXO31).

It is found in the cytoplasm. The protein operates within protein modification; protein ubiquitination. Substrate-recognition component of the SCF(FBXO31) protein ligase complex, which specifically mediates the ubiquitination of proteins amidated at their C-terminus in response to oxidative stress, leading to their degradation by the proteasome. Fbxo31 specifically recognizes and binds C-terminal peptides bearing an amide: C-terminal amidation in response to oxidative stress takes place following protein fragmentation. The SCF(FBXO31) also plays a role in G1 arrest following DNA damage by mediating ubiquitination of phosphorylated cyclin-D1 (ccnd1), promoting its degradation by the proteasome, resulting in G1 arrest. The SCF(FBXO31) complex is however not a major regulator of ccnd1 stability during the G1/S transition. In Xenopus laevis (African clawed frog), this protein is F-box only protein 31-A (fbxo31-a).